A 39-amino-acid polypeptide reads, in one-letter code: Bacteriocin lactococcin-G subunit alpha (39 aa).

Bacteriocin activity requires interaction of alpha and beta peptides in a molar ratio of 7:1 or 8:1 respectively.

Functionally, kills Lactococci. This chain is Bacteriocin lactococcin-G subunit alpha, found in Lactococcus lactis subsp. lactis (Streptococcus lactis).